A 129-amino-acid polypeptide reads, in one-letter code: Large ribosomal subunit protein bL12 (129 aa).

A disordered region spans residues 94–113 (TEGLPKTVKEKTSKSDAEDT).

It belongs to the bacterial ribosomal protein bL12 family. As to quaternary structure, homodimer. Part of the ribosomal stalk of the 50S ribosomal subunit. Forms a multimeric L10(L12)X complex, where L10 forms an elongated spine to which 2 to 4 L12 dimers bind in a sequential fashion. Binds GTP-bound translation factors.

In terms of biological role, forms part of the ribosomal stalk which helps the ribosome interact with GTP-bound translation factors. Is thus essential for accurate translation. This is Large ribosomal subunit protein bL12 from Chlamydia pneumoniae (Chlamydophila pneumoniae).